The sequence spans 198 residues: Na(+)-translocating NADH-quinone reductase subunit E (198 aa).

The next 6 helical transmembrane spans lie at 11–31 (SVFI…FLAV), 35–55 (VSTA…AVPV), 77–97 (FLNF…LEMI), 110–130 (GIFL…SFMV), 140–160 (VVYG…LAGL), and 176–196 (LGIT…FSGI).

Belongs to the NqrDE/RnfAE family. In terms of assembly, composed of six subunits; NqrA, NqrB, NqrC, NqrD, NqrE and NqrF.

The protein localises to the cell inner membrane. The enzyme catalyses a ubiquinone + n Na(+)(in) + NADH + H(+) = a ubiquinol + n Na(+)(out) + NAD(+). Functionally, NQR complex catalyzes the reduction of ubiquinone-1 to ubiquinol by two successive reactions, coupled with the transport of Na(+) ions from the cytoplasm to the periplasm. NqrA to NqrE are probably involved in the second step, the conversion of ubisemiquinone to ubiquinol. This Haemophilus ducreyi (strain 35000HP / ATCC 700724) protein is Na(+)-translocating NADH-quinone reductase subunit E.